A 1588-amino-acid polypeptide reads, in one-letter code: MNKIFKVIWNPATGNYTVTSETAKSRGKKSGRSKLLISALVAGGMLSSFGALANAGNDNGQGVDYGSGSAGDGWVAIGKGAKANTFMNTSGSSTAVGYDAIAEGQYSSAIGSKTHAIGGASMAFGVSAISEGDRSIALGASSYSLGQYSMALGRYSKALGKLSIAMGDSSKAEGANAIALGNATKATEIMSIALGDTANASKAYSMALGASSVASEENAIAIGAETEAAENATAIGNNAKAKGTNSMAMGFGSLADKVNTIALGNGSQALADNAIAIGQGNKADGVDAIALGNGSQSRGLNTIALGTASNATGDKSLALGSNSSANGINSVALGADSIADLDNTVSVGNSSLKRKIVNVKNGAIKSDSYDAINGSQLYAISDSVAKRLGGGAAVDVDDGTVTAPTYNLKNGSKNNVGAALAVLDENTLQWDQTKGKYSAAHGTSSPTASVITDVADGTISASSKDAVNGSQLKATNDDVEANTANIATNTSNIATNTANIATNTTNITNLTDSVGDLQADALLWNETKKAFSAAHGQDTTSKITNVKDADLTADSTDAVNGSQLKTTNDAVATNTTNIANNTSNIATNTTNISNLTETVTNLGEDALKWDKDNGVFTAAHGTETTSKITNVKDGDLTTGSTDAVNGSQLKTTNDAVATNTTNIATNTTNISNLTETVTNLGEDALKWDKDNGVFTAAHGNNTASKITNILDGTVTATSSDAINGSQLYDLSSNIATYFGGNASVNTDGVFTGPTYKIGETNYYNVGDALAAINSSFSTSLGDALLWDATAGKFSAKHGTNGDASVITDVADGEISDSSSDAVNGSQLHGVSSYVVDALGGGAEVNADGTITAPTYTIANADYDNVGDALNAIDTTLDDALLWDADAGENGAFSAAHGKDKTASVITNVANGAISAASSDAINGSQLYTTNKYIADALGGDAEVNADGTITAPTYTIANAEYNNVGDALDALDDNALLWDETANGGAGAYNASHDGKASIITNVANGSISEDSTDAVNGSQLNATNMMIEQNTQIINQLAGNTDATYIQENGAGINYVRTNDDGLAFNDASAQGVGATAIGYNSVAKGDSSVAIGQGSYSDVDTGIALGSSSVSSRVIAKGSRDTSITENGVVIGYDTTDGELLGALSIGDDGKYRQIINVADGSEAHDAVTVRQLQNAIGAVATTPTKYFHANSTEEDSLAVGTDSLAMGAKTIVNGDKGIGIGYGAYVDANALNGIAIGSNAQVIHVNSIAIGNGSTTTRGAQTNYTAYNMDAPQNSVGEFSVGSADGQRQITNVAAGSADTDAVNVGQLKVTDAQVSQNTQSITNLDNRVTNLDSRVTNIENGIGDIVTTGSTKYFKTNTDGVDASAQGKDSVAIGSGSIAAADNSVALGTGSVATEENTISVGSSTNQRRITNVAAGKNATDAVNVAQLKSSEAGGVRYDTKADGSIDYSNITLGGGNGGTTRISNVSAGVNNNDVVNYAQLKQSVQETKQYTDQRMVEMDNKLSKTESKLSGGIASAMAMTGLPQAYTPGASMASIGGGTYNGESAVALGVSMVSANGRWVYKLQGSTNSQGEYSAALGAGIQW.

Residues 1–53 (MNKIFKVIWNPATGNYTVTSETAKSRGKKSGRSKLLISALVAGGMLSSFGALA) form the signal peptide. The interval 54–1499 (NAGNDNGQGV…QETKQYTDQR (1446 aa)) is surface exposed passenger domain. Residues 1500-1588 (MVEMDNKLSK…SAALGAGIQW (89 aa)) are translocator domain. 4 beta stranded membrane-spanning segments follow: residues 1534 to 1544 (GASMASIGGGT), 1548 to 1558 (ESAVALGVSMV), 1567 to 1573 (KLQGSTN), and 1577 to 1588 (EYSAALGAGIQW).

This sequence belongs to the autotransporter-2 (AT-2) (TC 1.B.40) family. Homotrimer.

Its subcellular location is the cell surface. The protein resides in the cell outer membrane. In terms of biological role, mediates aggregation, biofilm formation and adhesion to a range of extracellular matrix (ECM) proteins, such as fibronectin, fibrinogen, laminin and collagen types I, II, III, and V. Mediates adhesion to intestinal epithelial cells. The sequence is that of Autotransporter adhesin EhaG from Escherichia coli O157:H7.